The chain runs to 290 residues: Pyridoxal kinase PdxY (290 aa).

Residues Ser12 and 47-48 (TQ) contribute to the substrate site. Residues Asp114, Glu151, Lys184, and 211-214 (RPLL) each bind ATP. Residue Asp225 participates in substrate binding.

It belongs to the pyridoxine kinase family. PdxY subfamily. Homodimer. Mg(2+) is required as a cofactor.

The enzyme catalyses pyridoxal + ATP = pyridoxal 5'-phosphate + ADP + H(+). Its pathway is cofactor metabolism; pyridoxal 5'-phosphate salvage; pyridoxal 5'-phosphate from pyridoxal: step 1/1. Pyridoxal kinase involved in the salvage pathway of pyridoxal 5'-phosphate (PLP). Catalyzes the phosphorylation of pyridoxal to PLP. This chain is Pyridoxal kinase PdxY, found in Pseudomonas fluorescens (strain Pf0-1).